Here is a 203-residue protein sequence, read N- to C-terminus: Histidine biosynthesis bifunctional protein HisIE (203 aa).

Residues 1–114 form a phosphoribosyl-AMP cyclohydrolase region; the sequence is MLTEQQRREL…FGDTAHQWLF (114 aa). Residues 115–203 are phosphoribosyl-ATP pyrophosphohydrolase; the sequence is LYQLEQLLAE…VIENLRKRHQ (89 aa).

In the N-terminal section; belongs to the PRA-CH family. The protein in the C-terminal section; belongs to the PRA-PH family.

The protein localises to the cytoplasm. The enzyme catalyses 1-(5-phospho-beta-D-ribosyl)-ATP + H2O = 1-(5-phospho-beta-D-ribosyl)-5'-AMP + diphosphate + H(+). It catalyses the reaction 1-(5-phospho-beta-D-ribosyl)-5'-AMP + H2O = 1-(5-phospho-beta-D-ribosyl)-5-[(5-phospho-beta-D-ribosylamino)methylideneamino]imidazole-4-carboxamide. The protein operates within amino-acid biosynthesis; L-histidine biosynthesis; L-histidine from 5-phospho-alpha-D-ribose 1-diphosphate: step 2/9. It functions in the pathway amino-acid biosynthesis; L-histidine biosynthesis; L-histidine from 5-phospho-alpha-D-ribose 1-diphosphate: step 3/9. The sequence is that of Histidine biosynthesis bifunctional protein HisIE from Escherichia coli O6:H1 (strain CFT073 / ATCC 700928 / UPEC).